The chain runs to 427 residues: 3-phosphoshikimate 1-carboxyvinyltransferase (427 aa).

Lys22, Ser23, and Arg27 together coordinate 3-phosphoshikimate. Residue Lys22 participates in phosphoenolpyruvate binding. Phosphoenolpyruvate is bound by residues Gly96 and Arg124. 3-phosphoshikimate-binding residues include Ser169, Ser170, Gln171, Ser197, Asp313, Asn336, and Lys340. Residue Gln171 coordinates phosphoenolpyruvate. Asp313 (proton acceptor) is an active-site residue. Phosphoenolpyruvate contacts are provided by Arg344, Arg386, and Lys411.

It belongs to the EPSP synthase family. In terms of assembly, monomer.

The protein resides in the cytoplasm. The catalysed reaction is 3-phosphoshikimate + phosphoenolpyruvate = 5-O-(1-carboxyvinyl)-3-phosphoshikimate + phosphate. It functions in the pathway metabolic intermediate biosynthesis; chorismate biosynthesis; chorismate from D-erythrose 4-phosphate and phosphoenolpyruvate: step 6/7. Functionally, catalyzes the transfer of the enolpyruvyl moiety of phosphoenolpyruvate (PEP) to the 5-hydroxyl of shikimate-3-phosphate (S3P) to produce enolpyruvyl shikimate-3-phosphate and inorganic phosphate. This Salmonella heidelberg (strain SL476) protein is 3-phosphoshikimate 1-carboxyvinyltransferase.